The following is a 168-amino-acid chain: Small ribosomal subunit protein uS9 (168 aa).

The span at 1–15 shows a compositional bias: acidic residues; it reads MAQNEETTEAVEAEE. Residues 1–34 are disordered; it reads MAQNEETTEAVEAEETLTSYTSESGAAEAAAPKK.

It belongs to the universal ribosomal protein uS9 family.

In Arthrobacter sp. (strain FB24), this protein is Small ribosomal subunit protein uS9.